A 349-amino-acid polypeptide reads, in one-letter code: Phosphorylcholine phosphatase (349 aa).

Positions 1–22 are cleaved as a signal peptide; it reads MTFAKGILAALALAAAVGQASA. D53 acts as the Nucleophile in catalysis. D53 and D55 together coordinate Mg(2+). D55 (proton donor) is an active-site residue. C109 and C116 are oxidised to a cystine. A Mg(2+)-binding site is contributed by D284.

The protein belongs to the HAD-like hydrolase superfamily. In terms of assembly, monomer. Homodimer. Homotetramer. The cofactor is Mg(2+).

It is found in the periplasm. It carries out the reaction phosphocholine + H2O = choline + phosphate. It catalyses the reaction phosphoethanolamine + H2O = ethanolamine + phosphate. With respect to regulation, activity is inhibited by high concentrations of phosphorylcholine, phosphorylethanolamine, choline or betaine. Displays different properties depending on the substrate utilized, the pH conditions as well as the presence or absence of metal ions. At pH 5, activity is inhibited by Al(3+) ions. At pH 7.4, the enzyme cannot catalyze the hydrolysis of pNPP, phosphorylethanolamine is a poor substrate in either the presence or absence of divalent cations, and activity measured with phosphorylcholine is independent of divalent cations or is not inhibited by Al(3+) ions. Mg(2+) produces identical activation at pH 5.0 and 7.4, but Zn(2+) is an activator at pH 5.0 and becomes an inhibitor at pH 7.4. This inhibition at pH 7.4 may be due to a transition from octahedral to tetrahedral coordination geometry, which is produced by hydrolysis of the Zn-hexacoordinated complex. Catalyzes the hydrolysis of phosphorylcholine (PCho) to produce choline and inorganic phosphate. Can also hydrolyze phosphorylethanolamine and the nonphysiological substrate p-nitrophenylphosphate (pNPP). Shows higher affinity and catalytic efficiency with phosphorylcholine as substrate. Its function is as follows. Is probably involved in virulence. The bacteria may break down various host compounds or host cell membranes through the coordinated action of phospholipase C and phosphocholine phosphatase. The final consequence of the action of these enzymes is an increase of the free choline concentration, which may promote the pathogenicity of P.aeruginosa. The protein is Phosphorylcholine phosphatase of Pseudomonas aeruginosa (strain ATCC 15692 / DSM 22644 / CIP 104116 / JCM 14847 / LMG 12228 / 1C / PRS 101 / PAO1).